The following is a 561-amino-acid chain: DNA ligase (561 aa).

Glutamate 253 is an ATP binding site. Lysine 255 functions as the N6-AMP-lysine intermediate in the catalytic mechanism. Residues arginine 260, arginine 275, glutamate 304, phenylalanine 344, arginine 421, and lysine 427 each coordinate ATP.

It belongs to the ATP-dependent DNA ligase family. It depends on Mg(2+) as a cofactor.

It catalyses the reaction ATP + (deoxyribonucleotide)n-3'-hydroxyl + 5'-phospho-(deoxyribonucleotide)m = (deoxyribonucleotide)n+m + AMP + diphosphate.. In terms of biological role, DNA ligase that seals nicks in double-stranded DNA during DNA replication, DNA recombination and DNA repair. The protein is DNA ligase of Halobacterium salinarum (strain ATCC 29341 / DSM 671 / R1).